A 41-amino-acid chain; its full sequence is Large ribosomal subunit protein bL36 (41 aa).

It belongs to the bacterial ribosomal protein bL36 family.

This chain is Large ribosomal subunit protein bL36, found in Cereibacter sphaeroides (strain ATCC 17029 / ATH 2.4.9) (Rhodobacter sphaeroides).